Here is a 297-residue protein sequence, read N- to C-terminus: Acetylglutamate kinase (297 aa).

Substrate-binding positions include 73–74 (GG), Arg95, and Asn188.

The protein belongs to the acetylglutamate kinase family. ArgB subfamily.

It is found in the cytoplasm. The enzyme catalyses N-acetyl-L-glutamate + ATP = N-acetyl-L-glutamyl 5-phosphate + ADP. Its pathway is amino-acid biosynthesis; L-arginine biosynthesis; N(2)-acetyl-L-ornithine from L-glutamate: step 2/4. Its function is as follows. Catalyzes the ATP-dependent phosphorylation of N-acetyl-L-glutamate. This Trichormus variabilis (strain ATCC 29413 / PCC 7937) (Anabaena variabilis) protein is Acetylglutamate kinase.